We begin with the raw amino-acid sequence, 69 residues long: Putative membrane protein insertion efficiency factor (69 aa).

Belongs to the UPF0161 family.

Its subcellular location is the cell inner membrane. Its function is as follows. Could be involved in insertion of integral membrane proteins into the membrane. This chain is Putative membrane protein insertion efficiency factor, found in Geobacter sulfurreducens (strain ATCC 51573 / DSM 12127 / PCA).